Reading from the N-terminus, the 88-residue chain is Putative membrane protein insertion efficiency factor (88 aa).

Residues 68-88 (VPPPNSDTRARGEADARSHRL) form a disordered region. Over residues 75 to 88 (TRARGEADARSHRL) the composition is skewed to basic and acidic residues.

It belongs to the UPF0161 family.

The protein localises to the cell inner membrane. Functionally, could be involved in insertion of integral membrane proteins into the membrane. The polypeptide is Putative membrane protein insertion efficiency factor (Burkholderia orbicola (strain MC0-3)).